The sequence spans 142 residues: Putative pre-16S rRNA nuclease (142 aa).

Belongs to the YqgF nuclease family.

It localises to the cytoplasm. Its function is as follows. Could be a nuclease involved in processing of the 5'-end of pre-16S rRNA. This is Putative pre-16S rRNA nuclease from Lactobacillus delbrueckii subsp. bulgaricus (strain ATCC 11842 / DSM 20081 / BCRC 10696 / JCM 1002 / NBRC 13953 / NCIMB 11778 / NCTC 12712 / WDCM 00102 / Lb 14).